The primary structure comprises 72 residues: Large ribosomal subunit protein bL31 (72 aa).

It belongs to the bacterial ribosomal protein bL31 family. Type A subfamily. Part of the 50S ribosomal subunit.

Its function is as follows. Binds the 23S rRNA. The protein is Large ribosomal subunit protein bL31 of Deinococcus geothermalis (strain DSM 11300 / CIP 105573 / AG-3a).